A 286-amino-acid polypeptide reads, in one-letter code: Bifunctional protein FolD (286 aa).

NADP(+)-binding positions include 165 to 167, Ser-190, and Ile-231; that span reads GRS.

This sequence belongs to the tetrahydrofolate dehydrogenase/cyclohydrolase family. As to quaternary structure, homodimer.

It carries out the reaction (6R)-5,10-methylene-5,6,7,8-tetrahydrofolate + NADP(+) = (6R)-5,10-methenyltetrahydrofolate + NADPH. The enzyme catalyses (6R)-5,10-methenyltetrahydrofolate + H2O = (6R)-10-formyltetrahydrofolate + H(+). The protein operates within one-carbon metabolism; tetrahydrofolate interconversion. Its function is as follows. Catalyzes the oxidation of 5,10-methylenetetrahydrofolate to 5,10-methenyltetrahydrofolate and then the hydrolysis of 5,10-methenyltetrahydrofolate to 10-formyltetrahydrofolate. The chain is Bifunctional protein FolD from Thermodesulfovibrio yellowstonii (strain ATCC 51303 / DSM 11347 / YP87).